Here is a 449-residue protein sequence, read N- to C-terminus: Phosphoglucosamine mutase (449 aa).

The active-site Phosphoserine intermediate is the serine 101. Residues serine 101, aspartate 242, aspartate 244, and aspartate 246 each coordinate Mg(2+). At serine 101 the chain carries Phosphoserine.

This sequence belongs to the phosphohexose mutase family. Mg(2+) is required as a cofactor. In terms of processing, activated by phosphorylation.

It carries out the reaction alpha-D-glucosamine 1-phosphate = D-glucosamine 6-phosphate. Catalyzes the conversion of glucosamine-6-phosphate to glucosamine-1-phosphate. The polypeptide is Phosphoglucosamine mutase (Methylocella silvestris (strain DSM 15510 / CIP 108128 / LMG 27833 / NCIMB 13906 / BL2)).